We begin with the raw amino-acid sequence, 378 residues long: 3-dehydroquinate synthase (378 aa).

Residues 115 to 119 (GVVGD), 139 to 140 (TS), Lys152, and Lys161 contribute to the NAD(+) site. Zn(2+)-binding residues include Glu194, His256, and His275.

It belongs to the sugar phosphate cyclases superfamily. Dehydroquinate synthase family. Co(2+) is required as a cofactor. It depends on Zn(2+) as a cofactor. Requires NAD(+) as cofactor.

It is found in the cytoplasm. The enzyme catalyses 7-phospho-2-dehydro-3-deoxy-D-arabino-heptonate = 3-dehydroquinate + phosphate. It functions in the pathway metabolic intermediate biosynthesis; chorismate biosynthesis; chorismate from D-erythrose 4-phosphate and phosphoenolpyruvate: step 2/7. Its function is as follows. Catalyzes the conversion of 3-deoxy-D-arabino-heptulosonate 7-phosphate (DAHP) to dehydroquinate (DHQ). This Brucella anthropi (strain ATCC 49188 / DSM 6882 / CCUG 24695 / JCM 21032 / LMG 3331 / NBRC 15819 / NCTC 12168 / Alc 37) (Ochrobactrum anthropi) protein is 3-dehydroquinate synthase.